The primary structure comprises 171 residues: Protein-export protein SecB (171 aa).

The protein belongs to the SecB family. As to quaternary structure, homotetramer, a dimer of dimers. One homotetramer interacts with 1 SecA dimer.

The protein localises to the cytoplasm. One of the proteins required for the normal export of preproteins out of the cell cytoplasm. It is a molecular chaperone that binds to a subset of precursor proteins, maintaining them in a translocation-competent state. It also specifically binds to its receptor SecA. This is Protein-export protein SecB from Xanthomonas oryzae pv. oryzae (strain MAFF 311018).